Consider the following 228-residue polypeptide: MTDQTYCDRLVQDTPFLTGHGRLSEQQVDRIILQLNRYYPQILTNKEAEKFRNPKASLRVRLCDLLSHLQRSGERDCQEFYRALYIHAQPLHSRLPSRHALRKFHITNHACLVLARGGHPSLPLMAWMSSMTTQVCCSPGLASPLASAPPQRPPSGPEGRVWQAQAVQMLVSVSHFLPLPPSLSHGSFHTAWGILYVHSCPSFSNLIPRGSLHVCVDSNLVPTAAWRS.

An intrachain disulfide couples Cys-7 to Cys-77. A CARD domain is found at 8-99 (DRLVQDTPFL…PLHSRLPSRH (92 aa)). At Val-113 the chain carries Phosphoserine.

Associates with BCL10 by CARD-CARD interaction. In terms of tissue distribution, expressed in ovary, testis, placenta, skeletal muscle, kidney, lung, heart and liver (at protein level). Expressed in thymus and brain.

The protein localises to the nucleus. It localises to the endoplasmic reticulum membrane. The protein resides in the mitochondrion membrane. Functionally, plays a role in inhibiting the effects of BCL10-induced activation of NF-kappa-B. May inhibit the phosphorylation of BCL10 in a CARD-dependent manner. The polypeptide is Caspase recruitment domain-containing protein 19 (CARD19) (Homo sapiens (Human)).